Reading from the N-terminus, the 293-residue chain is GTPase Era (293 aa).

The 170-residue stretch at 5 to 174 (RTISVCIIGR…ITGKAQIAPW (170 aa)) folds into the Era-type G domain. Residues 13-20 (GRPNSGKS) form a G1 region. Position 13-20 (13-20 (GRPNSGKS)) interacts with GTP. The interval 39 to 43 (QTTRS) is G2. The tract at residues 60–63 (DTPG) is G3. GTP is bound by residues 60–64 (DTPGI) and 122–125 (NKID). A G4 region spans residues 122–125 (NKID). The interval 150-152 (ISA) is G5. Residues 202-279 (LQQELPYKLT…HLFLFVKVHE (78 aa)) enclose the KH type-2 domain.

Belongs to the TRAFAC class TrmE-Era-EngA-EngB-Septin-like GTPase superfamily. Era GTPase family. In terms of assembly, monomer.

It is found in the cytoplasm. It localises to the cell inner membrane. In terms of biological role, an essential GTPase that binds both GDP and GTP, with rapid nucleotide exchange. Plays a role in 16S rRNA processing and 30S ribosomal subunit biogenesis and possibly also in cell cycle regulation and energy metabolism. The protein is GTPase Era of Rickettsia akari (strain Hartford).